The chain runs to 415 residues: DNA polymerase IV 2 (415 aa).

The UmuC domain occupies 7-183 (ILHADLDAFY…LPVSLMWGVG (177 aa)). Residues Asp11 and Asp101 each contribute to the Mg(2+) site. Glu102 is an active-site residue.

It belongs to the DNA polymerase type-Y family. In terms of assembly, monomer. Requires Mg(2+) as cofactor.

Its subcellular location is the cytoplasm. The catalysed reaction is DNA(n) + a 2'-deoxyribonucleoside 5'-triphosphate = DNA(n+1) + diphosphate. In terms of biological role, poorly processive, error-prone DNA polymerase involved in untargeted mutagenesis. Copies undamaged DNA at stalled replication forks, which arise in vivo from mismatched or misaligned primer ends. These misaligned primers can be extended by PolIV. Exhibits no 3'-5' exonuclease (proofreading) activity. May be involved in translesional synthesis, in conjunction with the beta clamp from PolIII. The sequence is that of DNA polymerase IV 2 (dinB2) from Mesorhizobium japonicum (strain LMG 29417 / CECT 9101 / MAFF 303099) (Mesorhizobium loti (strain MAFF 303099)).